The sequence spans 92 residues: Evasin P942 (92 aa).

The signal sequence occupies residues 1 to 26; sequence MEVKTFAFLQIAVLIALGLHLAPAGS. 3 disulfides stabilise this stretch: Cys-44-Cys-63, Cys-48-Cys-65, and Cys-59-Cys-76. Residue Asn-47 is glycosylated (N-linked (GlcNAc...) asparagine). N-linked (GlcNAc...) asparagine glycosylation occurs at Asn-70.

It is found in the secreted. Its function is as follows. Salivary chemokine-binding protein which binds to host chemokines CXCL1, CXCL2, CXCL3, CXCL4, CXCL5, CXCL6, CXCL10, CXCL11 and CXCL13. In Ixodes ricinus (Common tick), this protein is Evasin P942.